Consider the following 302-residue polypeptide: N(G),N(G)-dimethylarginine dimethylaminohydrolase (302 aa).

Substrate is bound by residues aspartate 102, arginine 127, and arginine 172. Histidine 201 functions as the Proton donor in the catalytic mechanism. The active-site Nucleophile is cysteine 295.

The protein belongs to the DDAH family.

It catalyses the reaction N(omega),N(omega)-dimethyl-L-arginine + H2O = dimethylamine + L-citrulline. The enzyme catalyses N(omega)-methyl-L-arginine + H2O = L-citrulline + methylamine. In terms of biological role, hydrolyzes N(G),N(G)-dimethyl-L-arginine (ADMA) and N(G)-monomethyl-L-arginine (MMA). This chain is N(G),N(G)-dimethylarginine dimethylaminohydrolase, found in Mycobacterium tuberculosis (strain ATCC 25618 / H37Rv).